Consider the following 214-residue polypeptide: Alpha-S1-casein (214 aa).

The signal sequence occupies residues 1 to 15 (MKLLILTCLVAVALA). The segment at 59 to 91 (IGSESTEDQAMEDAKQMKAGSSSSSEEIVPNSA) is disordered. Residues serine 61, serine 63, serine 79, serine 80, serine 81, serine 82, serine 83, serine 90, and serine 130 each carry the phosphoserine modification.

Belongs to the alpha-casein family. As to expression, mammary gland specific. Secreted in milk.

The protein resides in the secreted. Important role in the capacity of milk to transport calcium phosphate. The chain is Alpha-S1-casein (CSN1S1) from Capra hircus (Goat).